The chain runs to 240 residues: Aspartate/glutamate leucyltransferase (240 aa).

Belongs to the R-transferase family. Bpt subfamily.

The protein resides in the cytoplasm. The enzyme catalyses N-terminal L-glutamyl-[protein] + L-leucyl-tRNA(Leu) = N-terminal L-leucyl-L-glutamyl-[protein] + tRNA(Leu) + H(+). The catalysed reaction is N-terminal L-aspartyl-[protein] + L-leucyl-tRNA(Leu) = N-terminal L-leucyl-L-aspartyl-[protein] + tRNA(Leu) + H(+). Functions in the N-end rule pathway of protein degradation where it conjugates Leu from its aminoacyl-tRNA to the N-termini of proteins containing an N-terminal aspartate or glutamate. The polypeptide is Aspartate/glutamate leucyltransferase (Thiobacillus denitrificans (strain ATCC 25259 / T1)).